Reading from the N-terminus, the 261-residue chain is Cytochrome c oxidase subunit 3 (261 aa).

Residues 1-15 (MTHQTHAYHMVNPSP) lie on the Mitochondrial matrix side of the membrane. The chain crosses the membrane as a helical span at residues 16–34 (WPLTGALSALLMTSGLIMW). The Mitochondrial intermembrane portion of the chain corresponds to 35–40 (FHFNST). The chain crosses the membrane as a helical span at residues 41-66 (TLLMLGLTTNMLTMYQWWRDVVREST). Residues 67 to 72 (FQGHHT) lie on the Mitochondrial matrix side of the membrane. A helical membrane pass occupies residues 73-105 (PNVQKGLRYGMILFIISEVLFFTGFFWAFYHSS). Over 106-128 (LAPTPELGGCWPPTGINPLNPLE) the chain is Mitochondrial intermembrane. A helical membrane pass occupies residues 129-152 (VPLLNTSVLLASGVSITWAHHSLM). At 153–155 (EGN) the chain is on the mitochondrial matrix side. The helical transmembrane segment at 156–183 (RNHMLQALFITIALGVYFTLLQASEYYE) threads the bilayer. The Mitochondrial intermembrane portion of the chain corresponds to 184–190 (APFTISD). A helical transmembrane segment spans residues 191 to 223 (GVYGSTFFVATGFHGLHVIIGSTFLIVCFFRQL). Residues 224–232 (KFHFTSNHH) lie on the Mitochondrial matrix side of the membrane. A helical membrane pass occupies residues 233-256 (FGFEAAAWYWHFVDVVWLFLYVSI). The Mitochondrial intermembrane segment spans residues 257–261 (YWWGS).

It belongs to the cytochrome c oxidase subunit 3 family. As to quaternary structure, component of the cytochrome c oxidase (complex IV, CIV), a multisubunit enzyme composed of 14 subunits. The complex is composed of a catalytic core of 3 subunits MT-CO1, MT-CO2 and MT-CO3, encoded in the mitochondrial DNA, and 11 supernumerary subunits COX4I, COX5A, COX5B, COX6A, COX6B, COX6C, COX7A, COX7B, COX7C, COX8 and NDUFA4, which are encoded in the nuclear genome. The complex exists as a monomer or a dimer and forms supercomplexes (SCs) in the inner mitochondrial membrane with NADH-ubiquinone oxidoreductase (complex I, CI) and ubiquinol-cytochrome c oxidoreductase (cytochrome b-c1 complex, complex III, CIII), resulting in different assemblies (supercomplex SCI(1)III(2)IV(1) and megacomplex MCI(2)III(2)IV(2)).

Its subcellular location is the mitochondrion inner membrane. The catalysed reaction is 4 Fe(II)-[cytochrome c] + O2 + 8 H(+)(in) = 4 Fe(III)-[cytochrome c] + 2 H2O + 4 H(+)(out). In terms of biological role, component of the cytochrome c oxidase, the last enzyme in the mitochondrial electron transport chain which drives oxidative phosphorylation. The respiratory chain contains 3 multisubunit complexes succinate dehydrogenase (complex II, CII), ubiquinol-cytochrome c oxidoreductase (cytochrome b-c1 complex, complex III, CIII) and cytochrome c oxidase (complex IV, CIV), that cooperate to transfer electrons derived from NADH and succinate to molecular oxygen, creating an electrochemical gradient over the inner membrane that drives transmembrane transport and the ATP synthase. Cytochrome c oxidase is the component of the respiratory chain that catalyzes the reduction of oxygen to water. Electrons originating from reduced cytochrome c in the intermembrane space (IMS) are transferred via the dinuclear copper A center (CU(A)) of subunit 2 and heme A of subunit 1 to the active site in subunit 1, a binuclear center (BNC) formed by heme A3 and copper B (CU(B)). The BNC reduces molecular oxygen to 2 water molecules using 4 electrons from cytochrome c in the IMS and 4 protons from the mitochondrial matrix. The sequence is that of Cytochrome c oxidase subunit 3 (MT-CO3) from Gazella leptoceros (Sand gazelle).